The sequence spans 515 residues: Carboxyl-terminal-processing peptidase 2, chloroplastic (515 aa).

The 89-residue stretch at 198-286 (FKSLRSGTQG…SAVELAIRSG (89 aa)) folds into the PDZ domain. Catalysis depends on charge relay system residues S417 and K442.

Belongs to the peptidase S41A family.

It localises to the plastid. Its subcellular location is the chloroplast thylakoid lumen. It catalyses the reaction The enzyme shows specific recognition of a C-terminal tripeptide, Xaa-Yaa-Zaa, in which Xaa is preferably Ala or Leu, Yaa is preferably Ala or Tyr, and Zaa is preferably Ala, but then cleaves at a variable distance from the C-terminus. A typical cleavage is -Ala-Ala-|-Arg-Ala-Ala-Lys-Glu-Asn-Tyr-Ala-Leu-Ala-Ala.. Its function is as follows. Protease involved in the C-terminal processing of the chloroplastic D1 protein of photosystem II. This proteolytic processing is necessary to allow the light-driven assembly of the tetranuclear manganese cluster, which is responsible for photosynthetic water oxidation. In Arabidopsis thaliana (Mouse-ear cress), this protein is Carboxyl-terminal-processing peptidase 2, chloroplastic (CTPA2).